We begin with the raw amino-acid sequence, 1220 residues long: DNA polymerase catalytic subunit (1220 aa).

Disordered regions lie at residues 21 to 43 and 641 to 691; these read GKRP…RPPQ and QADA…KPGV. Polar residues predominate over residues 646-660; sequence SETSELAMDSQSHAF.

It belongs to the DNA polymerase type-B family. As to quaternary structure, forms a complex with the ssDNA-binding protein, the DNA polymerase processivity factor, and the alkaline exonuclease. Interacts with the helicase-primase complex composed of the primase, the helicase and the primase-associated factor; this interaction may coordinate leading and lagging strand DNA synthesis at the replication fork.

It localises to the host nucleus. The enzyme catalyses DNA(n) + a 2'-deoxyribonucleoside 5'-triphosphate = DNA(n+1) + diphosphate. It carries out the reaction Endonucleolytic cleavage to 5'-phosphomonoester.. Replicates viral genomic DNA. The replication complex is composed of six viral proteins: the DNA polymerase, processivity factor, primase, primase-associated factor, helicase, and ssDNA-binding protein. Additionally, the polymerase contains an intrinsic ribonuclease H (RNase H) activity that specifically degrades RNA/DNA heteroduplexes or duplex DNA substrates in the 5' to 3' direction. Therefore, it can catalyze the excision of the RNA primers that initiate the synthesis of Okazaki fragments at a replication fork during viral DNA replication. The sequence is that of DNA polymerase catalytic subunit from Equine herpesvirus 1 (strain Ab4p) (EHV-1).